A 153-amino-acid chain; its full sequence is Arginine repressor (153 aa).

This sequence belongs to the ArgR family.

The protein localises to the cytoplasm. Its pathway is amino-acid biosynthesis; L-arginine biosynthesis [regulation]. Regulates arginine biosynthesis genes. This is Arginine repressor from Glaesserella parasuis serovar 5 (strain SH0165) (Haemophilus parasuis).